Consider the following 203-residue polypeptide: Nucleoside triphosphate pyrophosphatase (203 aa).

The Proton acceptor role is filled by Asp78.

The protein belongs to the Maf family. A divalent metal cation is required as a cofactor.

It is found in the cytoplasm. The enzyme catalyses a ribonucleoside 5'-triphosphate + H2O = a ribonucleoside 5'-phosphate + diphosphate + H(+). It catalyses the reaction a 2'-deoxyribonucleoside 5'-triphosphate + H2O = a 2'-deoxyribonucleoside 5'-phosphate + diphosphate + H(+). Nucleoside triphosphate pyrophosphatase. May have a dual role in cell division arrest and in preventing the incorporation of modified nucleotides into cellular nucleic acids. The polypeptide is Nucleoside triphosphate pyrophosphatase (Prochlorococcus marinus (strain MIT 9301)).